The primary structure comprises 835 residues: Leucine--tRNA ligase (835 aa).

The 'HIGH' region signature appears at 36–46 (PYPSGKIHVGH). Residues 602–606 (KMSKS) carry the 'KMSKS' region motif. Residue K605 participates in ATP binding.

It belongs to the class-I aminoacyl-tRNA synthetase family.

The protein localises to the cytoplasm. The enzyme catalyses tRNA(Leu) + L-leucine + ATP = L-leucyl-tRNA(Leu) + AMP + diphosphate. This Rickettsia africae (strain ESF-5) protein is Leucine--tRNA ligase.